The primary structure comprises 208 residues: RNA chaperone ProQ (208 aa).

2 stretches are compositionally biased toward basic and acidic residues: residues 99-115 (AQET…EKNK) and 126-135 (PAKDKPENTA). The segment at 99-149 (AQETLKESKAKVAEKNKATNKAAAKKAPAKDKPENTAKAKPKTAKKPAKPK) is disordered. The span at 137–149 (AKPKTAKKPAKPK) shows a compositional bias: basic residues.

Belongs to the ProQ family.

The protein localises to the cytoplasm. RNA chaperone with significant RNA binding, RNA strand exchange and RNA duplexing activities. This Idiomarina loihiensis (strain ATCC BAA-735 / DSM 15497 / L2-TR) protein is RNA chaperone ProQ.